A 1035-amino-acid polypeptide reads, in one-letter code: MGKVLILFLFVLLLITFINCTNNKILNNENSSNEDNVINVFLIPHSHCDLGWVQTLEEYYSENVTVILDNVINTLIKDSSKKFNWAEIYYFETWWNEQSSFLQAQVRNLVNNGQLYFVGGGWAQNDEGATHYQAVINQMTLGHQFLLSEFGVVPEIGWQIDPFGPSTLTATLFSLMGFKYHVINRIDERIKYIYNDTPDIVGSGWMTTDRSFEFQWYPSHNDQELSIFTHVLDHHYNSPYLIYPNASNPNQSLTTGFDFESDPTQNPPINQSNIYERAAVFVEIMQQRSQLYRHNNLLIPFGNDFRFQNASLEFDNMDKLITYINSNSSWGVTIQYATLNEYFEKVESIEPPVEYADIVGQDLFVYTMCLASDYQAFNTCANWWSGYYTSYPLLKQTARDSDSLLRVGEMLYSLSCFYSNGFDFDFNIGFYALSMHRNVSGILTHHDAITGTAKEYVRVNYFQMLNEAQSLTLDYNIPDFVGFLLSNKSLNIDYQSNGSSILNSTNPGDIIAISFTNSIAWDRIETVSIEIPFVNMAVYDYQLNPIQSQIVQRFDKSNNWYLYFQVATPALGISTYFIVILSTDGEILNDNSKNLPTPIQSILSISNELLFNDNDDETTTTTIGNSNFNLNFKFDRDNNNLLTLNSYDDLFNNKIGIPISQHLIEYTSLSDDAYKFRVQGLPIPLTPINPQFYLTIGPVVQIVTIIYNNNCSQSYLIYNDTTSFNPFETDNDNNNNSRLIKNDQYFEIDNIVASGWDKEISMKFTTNINNQNIFYTNNGLEIMKRQWEIHWNDTFIWSEITSNFYPMINTGYIVDQQVSDYQQQLTILSKQTFGASSQTNGEFEVLLIRRSNYTQWSVHEPMNDTSNPSLRVLCIFGDPNFSNEIRTPHSILFENPLQPVYSLIPNSIPIEKYIDTYNTLFKPLQTSLPYNLHLLTFTKQWIDSPSIIMRLINIYEIGQSINFSKSINFNIGSGDNNNNNNNNNNNGFLTHYNISQIIETTLSANSELSNPTNNLVITLEPLEIKTFLLTLSPKQ.

The N-terminal stretch at 1–20 is a signal peptide; sequence MGKVLILFLFVLLLITFINC. Asn19 and Asn30 each carry an N-linked (GlcNAc...) asparagine glycan. Zn(2+)-binding residues include His47 and Asp49. The N-linked (GlcNAc...) asparagine glycan is linked to Asn63. Asp161 is a binding site for Zn(2+). Asp161 serves as the catalytic Nucleophile. Asn245, Asn250, Asn270, Asn309, Asn327, and Asn438 each carry an N-linked (GlcNAc...) asparagine glycan. His446 serves as a coordination point for Zn(2+). N-linked (GlcNAc...) asparagine glycosylation is found at Asn487, Asn497, Asn503, Asn710, Asn719, Asn735, Asn792, Asn852, Asn863, Asn880, Asn962, and Asn993.

This sequence belongs to the glycosyl hydrolase 38 family. It depends on Zn(2+) as a cofactor.

The protein localises to the secreted. The enzyme catalyses Hydrolysis of terminal, non-reducing alpha-D-mannose residues in alpha-D-mannosides.. The chain is Alpha-mannosidase B (manB) from Dictyostelium discoideum (Social amoeba).